The chain runs to 381 residues: tRNA-cytidine(32) 2-sulfurtransferase (381 aa).

A PP-loop motif motif is present at residues 101–106; it reads SGGKDS. [4Fe-4S] cluster-binding residues include Cys-176, Cys-179, and Cys-267.

It belongs to the TtcA family. Homodimer. The cofactor is Mg(2+). [4Fe-4S] cluster serves as cofactor.

It localises to the cytoplasm. The catalysed reaction is cytidine(32) in tRNA + S-sulfanyl-L-cysteinyl-[cysteine desulfurase] + AH2 + ATP = 2-thiocytidine(32) in tRNA + L-cysteinyl-[cysteine desulfurase] + A + AMP + diphosphate + H(+). The protein operates within tRNA modification. Functionally, catalyzes the ATP-dependent 2-thiolation of cytidine in position 32 of tRNA, to form 2-thiocytidine (s(2)C32). The sulfur atoms are provided by the cysteine/cysteine desulfurase (IscS) system. This Psychrobacter cryohalolentis (strain ATCC BAA-1226 / DSM 17306 / VKM B-2378 / K5) protein is tRNA-cytidine(32) 2-sulfurtransferase.